Here is a 120-residue protein sequence, read N- to C-terminus: Ribonuclease P protein component (120 aa).

It belongs to the RnpA family. In terms of assembly, consists of a catalytic RNA component (M1 or rnpB) and a protein subunit.

It catalyses the reaction Endonucleolytic cleavage of RNA, removing 5'-extranucleotides from tRNA precursor.. RNaseP catalyzes the removal of the 5'-leader sequence from pre-tRNA to produce the mature 5'-terminus. It can also cleave other RNA substrates such as 4.5S RNA. The protein component plays an auxiliary but essential role in vivo by binding to the 5'-leader sequence and broadening the substrate specificity of the ribozyme. The sequence is that of Ribonuclease P protein component from Latilactobacillus sakei subsp. sakei (strain 23K) (Lactobacillus sakei subsp. sakei).